The sequence spans 34 residues: MFLAICDMPAFGPLNLILLLTMRLKSSVICSGTS.

This is an uncharacterized protein from Saccharomyces cerevisiae (strain ATCC 204508 / S288c) (Baker's yeast).